Consider the following 130-residue polypeptide: Glycine cleavage system H protein (130 aa).

The Lipoyl-binding domain occupies 24–106 (IYSVGITEHA…YTDGWLFRIK (83 aa)). N6-lipoyllysine is present on Lys-65.

This sequence belongs to the GcvH family. The glycine cleavage system is composed of four proteins: P, T, L and H. The cofactor is (R)-lipoate.

Its function is as follows. The glycine cleavage system catalyzes the degradation of glycine. The H protein shuttles the methylamine group of glycine from the P protein to the T protein. The polypeptide is Glycine cleavage system H protein (Pectobacterium atrosepticum (strain SCRI 1043 / ATCC BAA-672) (Erwinia carotovora subsp. atroseptica)).